The primary structure comprises 434 residues: D-amino acid dehydrogenase (434 aa).

Residue 3 to 17 participates in FAD binding; sequence VLVLGSGVIGTASAY.

Belongs to the DadA oxidoreductase family. Requires FAD as cofactor.

It carries out the reaction a D-alpha-amino acid + A + H2O = a 2-oxocarboxylate + AH2 + NH4(+). The protein operates within amino-acid degradation; D-alanine degradation; NH(3) and pyruvate from D-alanine: step 1/1. Functionally, oxidative deamination of D-amino acids. This is D-amino acid dehydrogenase from Pseudomonas putida (strain ATCC 700007 / DSM 6899 / JCM 31910 / BCRC 17059 / LMG 24140 / F1).